A 446-amino-acid chain; its full sequence is Peroxisomal biogenesis factor 3 (446 aa).

Residues 1–12 (MARTGLQRHRGK) lie on the Peroxisomal side of the membrane. Residues 13-33 (LLGTGAVLGGLVVAGVVAAVA) form a helical membrane-spanning segment. Over 34-446 (AKRWVRRQQQ…SASVYSNFGV (413 aa)) the chain is Cytoplasmic. The disordered stretch occupies residues 101-122 (RAGEDDEQGSGGHASAGEGSVS).

Belongs to the peroxin-3 family.

The protein resides in the peroxisome membrane. Involved in peroxisome biosynthesis. The chain is Peroxisomal biogenesis factor 3 (PEX3) from Eremothecium gossypii (strain ATCC 10895 / CBS 109.51 / FGSC 9923 / NRRL Y-1056) (Yeast).